Reading from the N-terminus, the 218-residue chain is Hypoxanthine-guanine phosphoribosyltransferase (218 aa).

An N-acetylalanine modification is found at alanine 2. Lysine 69 is a GMP binding site. An N6-acetyllysine modification is found at lysine 103. A Glycyl lysine isopeptide (Lys-Gly) (interchain with G-Cter in SUMO1); alternate cross-link involves residue lysine 115. Lysine 115 is covalently cross-linked (Glycyl lysine isopeptide (Lys-Gly) (interchain with G-Cter in SUMO2); alternate). Residues 134-142 (EDIIDTGKT), lysine 166, 186-188 (KFV), and aspartate 194 contribute to the GMP site. The active-site Proton acceptor is aspartate 138. Residue threonine 142 is modified to Phosphothreonine. Aspartate 194 contacts Mg(2+).

Belongs to the purine/pyrimidine phosphoribosyltransferase family. Homotetramer. Mg(2+) is required as a cofactor.

The protein resides in the cytoplasm. It catalyses the reaction IMP + diphosphate = hypoxanthine + 5-phospho-alpha-D-ribose 1-diphosphate. It carries out the reaction GMP + diphosphate = guanine + 5-phospho-alpha-D-ribose 1-diphosphate. It functions in the pathway purine metabolism; IMP biosynthesis via salvage pathway; IMP from hypoxanthine: step 1/1. Converts guanine to guanosine monophosphate, and hypoxanthine to inosine monophosphate. Transfers the 5-phosphoribosyl group from 5-phosphoribosylpyrophosphate onto the purine. Plays a central role in the generation of purine nucleotides through the purine salvage pathway. The polypeptide is Hypoxanthine-guanine phosphoribosyltransferase (HPRT1) (Pan troglodytes (Chimpanzee)).